An 837-amino-acid polypeptide reads, in one-letter code: Autophagy-related protein 13 (837 aa).

The span at 302-336 (LKIDRDSTTNEKVNEPEDDESHHADVESSQEHLQS) shows a compositional bias: basic and acidic residues. 4 disordered regions span residues 302 to 400 (LKID…QRPT), 446 to 540 (RNPR…MNDT), 631 to 704 (QLSG…TNSN), and 793 to 837 (ANAP…LAKH). Residues 358–400 (SISNNASMSLSPCSSGPQTVTEDSPSHNKPSANTTPIVSQRPT) show a composition bias toward polar residues. The segment covering 450-475 (SSTSSTNTTANIPIANNNSNNQYNST) has biased composition (low complexity). Polar residues predominate over residues 476-486 (FPRSVSSSHGS). Positions 509–523 (RFSSSFGSRASRRFS) are enriched in low complexity. Polar residues-rich tracts occupy residues 524–538 (NTSG…GNMN), 658–680 (YDNS…SGND), 688–704 (GTPS…TNSN), and 796–812 (PKSN…TNPP). Residues 815–825 (GEDDDDDDDDL) show a composition bias toward acidic residues.

The protein belongs to the ATG13 family. Fungi subfamily. In terms of assembly, interacts with ATG1 to form the ATG1-ATG13 kinase complex.

It localises to the cytoplasm. The protein resides in the preautophagosomal structure. Activates the ATG1 kinase in a nutritional condition dependent manner through the TOR pathway, leading to autophagy. Also involved in cytoplasm to vacuole transport (Cvt) and more specifically in Cvt vesicle formation. Seems to play a role in the switching machinery regulating the conversion between the Cvt pathway and autophagy. Finally, ATG13 is also required for glycogen storage during stationary phase. The polypeptide is Autophagy-related protein 13 (ATG13) (Debaryomyces hansenii (strain ATCC 36239 / CBS 767 / BCRC 21394 / JCM 1990 / NBRC 0083 / IGC 2968) (Yeast)).